The primary structure comprises 415 residues: tRNA (cytosine(38)-C(5))-methyltransferase (415 aa).

In terms of domain architecture, SAM-dependent MTase C5-type spans 4–396 (LRVLELYSGI…TVLCEGFGNA (393 aa)). Residues 13–15 (IGG), aspartate 34, 57–58 (IE), and serine 76 each bind S-adenosyl-L-methionine. The active site involves cysteine 79. Serine 376 contacts S-adenosyl-L-methionine.

Belongs to the class I-like SAM-binding methyltransferase superfamily. C5-methyltransferase family. Highly expressed in thymus, testis, and at much lower levels in spleen, lung, brain, heart, kidney, liver, skeletal muscle and embryonic stem cells.

The protein localises to the cytoplasm. The catalysed reaction is cytidine(38) in tRNA + S-adenosyl-L-methionine = 5-methylcytidine(38) in tRNA + S-adenosyl-L-homocysteine + H(+). Its function is as follows. Specifically methylates cytosine 38 in the anticodon loop of tRNA(Asp). Has higher activity on tRNA(Asp) modified with queuosine at position 34. The sequence is that of tRNA (cytosine(38)-C(5))-methyltransferase (Trdmt1) from Mus musculus (Mouse).